Consider the following 244-residue polypeptide: L-xylulose reductase (244 aa).

The residue at position 1 (M1) is an N-acetylmethionine. 11-39 (LVTGAGKGIGRSTVLALKAAGAQVVAVSR) is an NADP(+) binding site. Omega-N-methylarginine is present on R21. A substrate-binding site is contributed by S136. Y149 (proton acceptor) is an active-site residue. The active site involves K153.

Belongs to the short-chain dehydrogenases/reductases (SDR) family. Homotetramer. In terms of tissue distribution, highly expressed in kidney, liver and epididymis. Expressed at intermediate level in lung. Weakly or not expressed in brain, heart, spleen and testis.

It is found in the membrane. The protein localises to the apical cell membrane. It catalyses the reaction xylitol + NADP(+) = L-xylulose + NADPH + H(+). Functionally, catalyzes the NADPH-dependent reduction of several pentoses, tetroses, trioses, alpha-dicarbonyl compounds and L-xylulose. Participates in the uronate cycle of glucose metabolism. May play a role in the water absorption and cellular osmoregulation in the proximal renal tubules by producing xylitol, an osmolyte, thereby preventing osmolytic stress from occurring in the renal tubules. This is L-xylulose reductase (Dcxr) from Mus musculus (Mouse).